The primary structure comprises 609 residues: Manganese lipoxygenase (609 aa).

A signal peptide spans 1–16; that stretch reads MRLLLSIAGLTTVVNA. 4 N-linked (GlcNAc...) asparagine glycosylation sites follow: asparagine 24, asparagine 115, asparagine 156, and asparagine 193. Residues 117–609 form the Lipoxygenase domain; it reads SLKAIQDHGG…PGVIPFYLSV (493 aa). 2 residues coordinate Mn(2+): histidine 289 and histidine 294. The N-linked (GlcNAc...) asparagine glycan is linked to asparagine 385. 2 residues coordinate Mn(2+): histidine 474 and asparagine 478. Residue asparagine 539 is glycosylated (N-linked (GlcNAc...) asparagine). A Mn(2+)-binding site is contributed by valine 609.

This sequence belongs to the lipoxygenase family. Manganese lipoxygenase subfamily. Mn(2+) is required as a cofactor. In terms of processing, N- and O-glycosylated.

The protein resides in the secreted. It catalyses the reaction (9Z,12Z)-octadecadienoate + O2 = (9S)-hydroperoxy-(10E,12Z)-octadecadienoate. The enzyme catalyses (9Z,12Z)-octadecadienoate + O2 = (11S)-hydroperoxy-(9Z,12Z)-octadecadienoate. It carries out the reaction (9Z,12Z)-octadecadienoate + O2 = (13R)-hydroperoxy-(9Z,11E)-octadecadienoate. The catalysed reaction is (9Z,12Z,15Z)-octadecatrienoate + O2 = (11R)-hydroperoxy-(9Z,12Z,15Z)-octadecatrienoate. In terms of biological role, lipoxygenase that metabolizes linoleic and alpha-linolenic acids to 9-, 11- and 13-hydroperoxy fatty acids. Oxidizes linoleic acid to mainly 9S- and 13R-HPODE and alpha-linolenic acid to 11R-HPOTrE. The protein is Manganese lipoxygenase of Colletotrichum gloeosporioides (strain Cg-14) (Anthracnose fungus).